The following is a 155-amino-acid chain: UPF0178 protein TDE_2151 (155 aa).

The protein belongs to the UPF0178 family.

This is UPF0178 protein TDE_2151 from Treponema denticola (strain ATCC 35405 / DSM 14222 / CIP 103919 / JCM 8153 / KCTC 15104).